The chain runs to 397 residues: Mannonate dehydratase (397 aa).

The protein belongs to the mannonate dehydratase family. The cofactor is Fe(2+). Requires Mn(2+) as cofactor.

It carries out the reaction D-mannonate = 2-dehydro-3-deoxy-D-gluconate + H2O. It participates in carbohydrate metabolism; pentose and glucuronate interconversion. Its function is as follows. Catalyzes the dehydration of D-mannonate. The sequence is that of Mannonate dehydratase from Yersinia pestis bv. Antiqua (strain Angola).